The primary structure comprises 203 residues: Putative GPI-anchored protein YHR214W (203 aa).

Residues Met1 to Gly23 form the signal peptide. N-linked (GlcNAc...) asparagine glycosylation is found at Asn28 and Asn138. A lipid anchor (GPI-anchor amidated asparagine) is attached at Asn184. Residues Ala185–Leu203 constitute a propeptide, removed in mature form.

It localises to the cell membrane. The polypeptide is Putative GPI-anchored protein YHR214W (Saccharomyces cerevisiae (strain ATCC 204508 / S288c) (Baker's yeast)).